A 1561-amino-acid polypeptide reads, in one-letter code: Formin-E (1561 aa).

A compositionally biased stretch (low complexity) spans 1–28; that stretch reads MDNHSSSSNPSSLSSSSSSSSSSSSFLS. 4 disordered regions span residues 1-63, 77-187, 211-279, and 305-365; these read MDNH…EEKP, EEEE…GKLS, PIIV…SSED, and ILRS…NLNY. The span at 29–51 shows a compositional bias: basic and acidic residues; sequence DHVKKEEQNGLDTIKEEIENKIE. The stretch at 32 to 85 forms a coiled coil; that stretch reads KKEEQNGLDTIKEEIENKIENEEEEEKIEEKPIEKVEEEKIIVQKEEEEKIEEE. The span at 80-89 shows a compositional bias: acidic residues; it reads EKIEEEPIEK. A compositionally biased stretch (polar residues) spans 103–120; it reads DNINTTVEAKTLETSTEP. Positions 158-208 form a coiled coil; the sequence is EQQEQQEKQKEETKPSIREEVKEKIKGKLSEIKEEIKDIKEEIKHVIREEV. The span at 162–187 shows a compositional bias: basic and acidic residues; that stretch reads QQEKQKEETKPSIREEVKEKIKGKLS. Positions 220–229 are enriched in pro residues; it reads SPPPPPPPPS. The span at 230 to 258 shows a compositional bias: low complexity; the sequence is ITVQSSSPVSSQISSPVSSPVSSPKPSVT. The segment covering 305 to 320 has biased composition (polar residues); sequence ILRSKSSPNPGANNPN. The span at 326 to 365 shows a compositional bias: low complexity; it reads NNSSSSSSSNNNSDNNNNSDNNSNNNNINNNNSSSNNLNY. The Phorbol-ester/DAG-type zinc-finger motif lies at 379–427; sequence YHDFKIHRGTSSCVYCGENTRLWSTSYKCFFCGVVCHKKCLDSMNTIPC. Low complexity predominate over residues 465-534; sequence PSSITNSSSK…TSISSPPIAS (70 aa). Residues 465–549 form a disordered region; the sequence is PSSITNSSSK…PLLQQQQQQQ (85 aa). Positions 541-573 form a coiled coil; the sequence is LLQQQQQQQQQQQQQQQQQQQQQQQQQQISTTQ. The region spanning 581 to 929 is the GBD/FH3 domain; the sequence is SEKPDDDMIN…QISLHKGGFE (349 aa). A coiled-coil region spans residues 952-989; it reads LNRKLGELEKQNIDKAMKIQEQDINIKSLLDLLKQLKD. 3 disordered regions span residues 1009-1092, 1466-1508, and 1526-1561; these read MEPP…VPKP, EEKR…SDED, and RQAK…PNKN. Positions 1017–1033 are enriched in low complexity; that stretch reads SVKSPDDPNNAAPIVVA. Residues 1019–1081 form the FH1 domain; the sequence is KSPDDPNNAA…LGAKKPPAGV (63 aa). The segment covering 1034 to 1070 has biased composition (pro residues); sequence PIPPPPPPISGAPPPPPPPPPPMKGGAGPPPPPPPPG. Low complexity predominate over residues 1071 to 1081; the sequence is KLGAKKPPAGV. The FH2 domain occupies 1086-1475; that stretch reads PPKVPKPSHP…EEKRLQQKQQ (390 aa). Residues 1398–1491 are a coiled coil; sequence LATASTEVEK…RKLTTSNESA (94 aa). The segment covering 1466–1481 has biased composition (basic and acidic residues); it reads EEKRLQQKQQRQERAV. Composition is skewed to polar residues over residues 1484 to 1498 and 1536 to 1561; these read LTTS…PNHA and HQIA…PNKN. In terms of domain architecture, DAD spans 1488–1518; it reads NESASASPNHAKSTDDKSDEDDDIVNDLLMA.

Belongs to the formin homology family. Diaphanous subfamily. In terms of assembly, interacts (via GBD/FH3 domain) with activated Rho-GTPases.

In terms of biological role, formins play an important role in the nucleation of actin and the formation of linear actin filaments. The chain is Formin-E (forE) from Dictyostelium discoideum (Social amoeba).